The chain runs to 349 residues: ATPase GET3 (349 aa).

Residue 26-33 coordinates ATP; it reads KGGVGKTT. Asp57 is a catalytic residue. 2 residues coordinate ATP: Glu240 and Asn267. Zn(2+) contacts are provided by Cys280 and Cys283.

The protein belongs to the arsA ATPase family. Homodimer. Component of the Golgi to ER traffic (GET) complex, which is composed of GET1, GET2 and GET3. Within the complex, GET1 and GET2 form a heterotetramer which is stabilized by phosphatidylinositol binding and which binds to the GET3 homodimer. Interacts with the chloride channel protein GEF1.

It is found in the cytoplasm. The protein localises to the endoplasmic reticulum. Its subcellular location is the golgi apparatus. ATPase required for the post-translational delivery of tail-anchored (TA) proteins to the endoplasmic reticulum. Recognizes and selectively binds the transmembrane domain of TA proteins in the cytosol. This complex then targets to the endoplasmic reticulum by membrane-bound receptors GET1 and GET2, where the tail-anchored protein is released for insertion. This process is regulated by ATP binding and hydrolysis. ATP binding drives the homodimer towards the closed dimer state, facilitating recognition of newly synthesized TA membrane proteins. ATP hydrolysis is required for insertion. Subsequently, the homodimer reverts towards the open dimer state, lowering its affinity for the GET1-GET2 receptor, and returning it to the cytosol to initiate a new round of targeting. Cooperates with the HDEL receptor ERD2 to mediate the ATP-dependent retrieval of resident ER proteins that contain a C-terminal H-D-E-L retention signal from the Golgi to the ER. Involved in low-level resistance to the oxyanions arsenite and arsenate, and in heat tolerance. The sequence is that of ATPase GET3 from Kluyveromyces lactis (strain ATCC 8585 / CBS 2359 / DSM 70799 / NBRC 1267 / NRRL Y-1140 / WM37) (Yeast).